The primary structure comprises 186 residues: Ribosome-recycling factor (186 aa).

It belongs to the RRF family.

It localises to the cytoplasm. Responsible for the release of ribosomes from messenger RNA at the termination of protein biosynthesis. May increase the efficiency of translation by recycling ribosomes from one round of translation to another. The polypeptide is Ribosome-recycling factor (Ralstonia nicotianae (strain ATCC BAA-1114 / GMI1000) (Ralstonia solanacearum)).